A 78-amino-acid polypeptide reads, in one-letter code: Exodeoxyribonuclease 7 small subunit (78 aa).

The protein belongs to the XseB family. In terms of assembly, heterooligomer composed of large and small subunits.

It localises to the cytoplasm. It carries out the reaction Exonucleolytic cleavage in either 5'- to 3'- or 3'- to 5'-direction to yield nucleoside 5'-phosphates.. In terms of biological role, bidirectionally degrades single-stranded DNA into large acid-insoluble oligonucleotides, which are then degraded further into small acid-soluble oligonucleotides. The sequence is that of Exodeoxyribonuclease 7 small subunit from Desulfitobacterium hafniense (strain Y51).